The chain runs to 664 residues: DNA mismatch repair protein MutL (664 aa).

Residues 382–447 (RKAGQEQQLQ…YGEPAPSKQQ (66 aa)) are disordered. The segment covering 427-436 (RHTTSSNQSE) has biased composition (polar residues).

This sequence belongs to the DNA mismatch repair MutL/HexB family.

In terms of biological role, this protein is involved in the repair of mismatches in DNA. It is required for dam-dependent methyl-directed DNA mismatch repair. May act as a 'molecular matchmaker', a protein that promotes the formation of a stable complex between two or more DNA-binding proteins in an ATP-dependent manner without itself being part of a final effector complex. The protein is DNA mismatch repair protein MutL of Vibrio vulnificus (strain YJ016).